We begin with the raw amino-acid sequence, 189 residues long: uncharacterized protein (189 aa).

The next 3 membrane-spanning stretches (helical) occupy residues 2–22, 93–113, and 116–136; these read LVVVSLTPPVGVCVGLFHHLL, ILFYFYFVLILFYFIALYFIL, and FYSTILFFFPLFIKCSHLHTL.

The protein localises to the membrane. This is an uncharacterized protein from Schizosaccharomyces pombe (strain 972 / ATCC 24843) (Fission yeast).